We begin with the raw amino-acid sequence, 708 residues long: Exocyst complex component 8 (708 aa).

Residues 168–268 enclose the PH domain; it reads YLVYNGDLLE…WLEVLEETKR (101 aa). The span at 271–282 shows a compositional bias: basic and acidic residues; sequence ALSEKRRLEQEA. The tract at residues 271 to 314 is disordered; it reads ALSEKRRLEQEALPRPAPTPPESTNPFEEEEEEEEEPSAEEEAV. Positions 297 to 314 are enriched in acidic residues; that stretch reads FEEEEEEEEEPSAEEEAV.

This sequence belongs to the EXO84 family. As to quaternary structure, the exocyst complex is composed of EXOC1, EXOC2, EXOC3, EXOC4, EXOC5, EXOC6, EXOC7 and EXOC8.

Its subcellular location is the cytoplasm. The protein resides in the perinuclear region. It localises to the cell projection. The protein localises to the growth cone. Component of the exocyst complex involved in the docking of exocytic vesicles with fusion sites on the plasma membrane. This is Exocyst complex component 8 (EXOC8) from Gallus gallus (Chicken).